A 151-amino-acid polypeptide reads, in one-letter code: NADPH-dependent 7-cyano-7-deazaguanine reductase (151 aa).

The active-site Thioimide intermediate is Cys-49. The active-site Proton donor is the Asp-56. Substrate is bound by residues Ile-71–Ser-73 and His-90–Glu-91.

It belongs to the GTP cyclohydrolase I family. QueF type 1 subfamily.

It localises to the cytoplasm. The catalysed reaction is 7-aminomethyl-7-carbaguanine + 2 NADP(+) = 7-cyano-7-deazaguanine + 2 NADPH + 3 H(+). It functions in the pathway tRNA modification; tRNA-queuosine biosynthesis. Functionally, catalyzes the NADPH-dependent reduction of 7-cyano-7-deazaguanine (preQ0) to 7-aminomethyl-7-deazaguanine (preQ1). The sequence is that of NADPH-dependent 7-cyano-7-deazaguanine reductase from Caulobacter vibrioides (strain ATCC 19089 / CIP 103742 / CB 15) (Caulobacter crescentus).